The chain runs to 132 residues: MDVTRLLLATLLVFLCFFTAYSHPPPEEKLRDDRSLRSNSSVNLLDFPSVSIVALNKKSKQTSRKEAEKKRSSKKEASMKKVARPRTPLSAPCVATRDSCKPPAPACCDPCASCQCRFFRSACSCRVLSLNC.

Positions 1-22 (MDVTRLLLATLLVFLCFFTAYS) are cleaved as a signal peptide. The N-linked (GlcNAc...) asparagine glycan is linked to N39. Positions 57–88 (KKSKQTSRKEAEKKRSSKKEASMKKVARPRTP) are disordered. Positions 63–79 (SRKEAEKKRSSKKEASM) are enriched in basic and acidic residues. Intrachain disulfides connect C93–C108, C100–C114, C107–C125, C111–C132, and C116–C123. The Agouti domain occupies 93–132 (CVATRDSCKPPAPACCDPCASCQCRFFRSACSCRVLSLNC).

Its subcellular location is the secreted. Its function is as follows. Involved in the regulation of melanogenesis. The binding of ASP to MC1R precludes alpha-MSH initiated signaling and thus blocks production of cAMP, leading to a down-regulation of eumelanogenesis (brown/black pigment) and thus increasing synthesis of pheomelanin (yellow/red pigment). This chain is Agouti-signaling protein (ASIP), found in Macaca assamensis (Assam macaque).